Consider the following 80-residue polypeptide: Acyl carrier protein (80 aa).

The Carrier domain maps to 3 to 78 (DDTFSRIQSI…QVLEYIEAES (76 aa)). At serine 38 the chain carries O-(pantetheine 4'-phosphoryl)serine.

This sequence belongs to the acyl carrier protein (ACP) family. In terms of processing, 4'-phosphopantetheine is transferred from CoA to a specific serine of apo-ACP by AcpS. This modification is essential for activity because fatty acids are bound in thioester linkage to the sulfhydryl of the prosthetic group.

Its subcellular location is the plastid. It localises to the chloroplast. It participates in lipid metabolism; fatty acid biosynthesis. Functionally, carrier of the growing fatty acid chain in fatty acid biosynthesis. This Trieres chinensis (Marine centric diatom) protein is Acyl carrier protein.